The following is a 135-amino-acid chain: Large ribosomal subunit protein mL54 (135 aa).

A mitochondrion-targeting transit peptide spans 1-14 (MAAAHLLRASRVWA).

This sequence belongs to the mitochondrion-specific ribosomal protein mL54 family. As to quaternary structure, component of the mitochondrial ribosome large subunit (39S) which comprises a 16S rRNA and about 50 distinct proteins.

The protein localises to the mitochondrion. The protein is Large ribosomal subunit protein mL54 (Mrpl54) of Mus musculus (Mouse).